We begin with the raw amino-acid sequence, 810 residues long: Myoneurin (810 aa).

The BTB domain maps to 24 to 91 (CDCTVSIGQA…IYTGDLNMDR (68 aa)). Disordered regions lie at residues 122–146 (NVGS…DYEP) and 169–466 (VSMD…VKPV). Polar residues predominate over residues 173 to 183 (EAQSSSEQTPQ). 2 stretches are compositionally biased toward basic residues: residues 185–194 (VGKRGRKPKT) and 211–225 (GRGR…RPRV). Residues 229–238 (SSDSTDQSPA) are compositionally biased toward polar residues. The span at 243–253 (SPNGSSTSRGS) shows a compositional bias: low complexity. Residues 254–266 (GRPRGRPRVRPLS) constitute a DNA-binding region (a.T hook 1). The span at 270–308 (EDPRNVEDDPAANKDQEVEKGNEEQKKETGEKDDGKNDT) shows a compositional bias: basic and acidic residues. Residues 318 to 330 (KRGRGRPRIKPVS) constitute a DNA-binding region (a.T hook 2). Residues 331-346 (TEDQTTNSENVTTNAE) are compositionally biased toward polar residues. Residues 350 to 361 (EPAKTKDSEGTG) show a composition bias toward basic and acidic residues. Residues 361–373 (GRKRGRPRSKPVS) constitute a DNA-binding region (a.T hook 3). Over residues 386 to 396 (SGEEAGEETSQ) the composition is skewed to acidic residues. Over residues 419 to 428 (ISKRKRILSR) the composition is skewed to basic residues. The Nuclear localization signal motif lies at 428 to 432 (RKLKE). Residues 435 to 460 (AGDEEEEEEEEMDDEFENDNEDWAGE) show a composition bias toward acidic residues. 7 consecutive C2H2-type zinc fingers follow at residues 472–494 (PICN…MRIH), 500–522 (YQCT…MRIH), 528–551 (FTCT…RMHH), 557–579 (YKCE…IRKH), 585–607 (YECG…KRRH), 613–635 (YICD…NRKH), and 641–663 (YICL…MDVH).

This sequence belongs to the krueppel C2H2-type zinc-finger protein family.

The protein localises to the nucleus. This is Myoneurin (mynn) from Danio rerio (Zebrafish).